A 325-amino-acid chain; its full sequence is CRISPR-associated endonuclease Cas1 2 (325 aa).

Residues Glu145, His212, and Asp225 each contribute to the Mn(2+) site. The disordered stretch occupies residues 283-325 (EEEDPVEEDPTRPGGLWDLEGEVEGGVAYGGDDPGEGAEEPEG). Residues 315–325 (DPGEGAEEPEG) are compositionally biased toward acidic residues.

Belongs to the CRISPR-associated endonuclease Cas1 family. Homodimer, forms a heterotetramer with a Cas2 homodimer. Mg(2+) serves as cofactor. Mn(2+) is required as a cofactor.

Functionally, CRISPR (clustered regularly interspaced short palindromic repeat), is an adaptive immune system that provides protection against mobile genetic elements (viruses, transposable elements and conjugative plasmids). CRISPR clusters contain spacers, sequences complementary to antecedent mobile elements, and target invading nucleic acids. CRISPR clusters are transcribed and processed into CRISPR RNA (crRNA). Acts as a dsDNA endonuclease. Involved in the integration of spacer DNA into the CRISPR cassette. The polypeptide is CRISPR-associated endonuclease Cas1 2 (Thermus thermophilus (strain ATCC 27634 / DSM 579 / HB8)).